Consider the following 397-residue polypeptide: Cytochrome b (397 aa).

A run of 4 helical transmembrane segments spans residues 48 to 68 (FGSMLGLCLVIQLLSGLLLSA), 92 to 113 (WMLRNIHANGSSMFFICIYAHI), 128 to 148 (WYFGVHLFLLTMAEAFLGYTL), and 193 to 213 (FYTLHFLLPFVMVAVVFLHLF). The heme b site is built by His98 and His112. The heme b site is built by His197 and His211. His216 contacts a ubiquinone. The next 4 membrane-spanning stretches (helical) occupy residues 241 to 261 (IKDLFGYVCFSFFFMYLVCVD), 303 to 323 (AGGVYVMFLSIVVLYLIPTLH), 335 to 355 (LNQVVFWVLVGSFISLTWIGA), and 362 to 382 (YIILGSAFQLFISLVYCWTPF).

The protein belongs to the cytochrome b family. The main subunits of complex b-c1 are: cytochrome b, cytochrome c1 and the Rieske protein. It depends on heme b as a cofactor.

Its subcellular location is the mitochondrion inner membrane. Functionally, component of the ubiquinol-cytochrome c reductase complex (complex III or cytochrome b-c1 complex) that is part of the mitochondrial respiratory chain. The b-c1 complex mediates electron transfer from ubiquinol to cytochrome c. Contributes to the generation of a proton gradient across the mitochondrial membrane that is then used for ATP synthesis. This Mytilus edulis (Blue mussel) protein is Cytochrome b (MT-CYB).